Consider the following 424-residue polypeptide: Na(+), Li(+), K(+)/H(+) antiporter (424 aa).

12 helical membrane-spanning segments follow: residues 15 to 35 (VGEF…AIYF), 42 to 62 (GLAG…NLFG), 74 to 94 (MLVS…LANS), 105 to 125 (VAFT…QAMI), 141 to 161 (FYTT…VLFF), 165 to 185 (FELL…LRFY), 227 to 247 (LLFV…DLVI), 274 to 294 (TSFG…TVVI), 305 to 325 (WVFF…PMTS), 327 to 347 (FWIF…VVGL), 367 to 389 (AASL…TAWF), and 393 to 415 (WTFI…MFHL).

This sequence belongs to the major facilitator superfamily.

The protein localises to the cell membrane. With respect to regulation, norfloxacin transport is inhibited by CCCP. In terms of biological role, exhibits dual functions as a Na(+)(Li(+)/K(+))/H(+) antiporter and a multidrug efflux pump. Catalyzes the efflux of Na(+), Li(+) and K(+) in exchange for external protons. Shows a preference for Na(+), followed by K(+) and Li(+). Can also function as a multidrug efflux pump. Transports ethidium bromide and norfloxacin. The protein is Na(+), Li(+), K(+)/H(+) antiporter of Planococcus maritimus.